The following is a 231-amino-acid chain: Ribonuclease HII (231 aa).

An RNase H type-2 domain is found at 33 to 222 (WPVAGADEAG…FREAQEQPLA (190 aa)). The a divalent metal cation site is built by Asp-39, Glu-40, and Asp-130.

It belongs to the RNase HII family. Mn(2+) is required as a cofactor. The cofactor is Mg(2+).

It localises to the cytoplasm. The catalysed reaction is Endonucleolytic cleavage to 5'-phosphomonoester.. In terms of biological role, endonuclease that specifically degrades the RNA of RNA-DNA hybrids. The protein is Ribonuclease HII of Sinorhizobium fredii (strain NBRC 101917 / NGR234).